A 188-amino-acid chain; its full sequence is Cytochrome b-245 chaperone 1 homolog (188 aa).

The chain crosses the membrane as a helical span at residues 20 to 42; it reads SIRSWSLLVGILSVGLAAAYYST.

This sequence belongs to the CYBC1 family.

Its subcellular location is the endoplasmic reticulum membrane. Functionally, functions as a chaperone necessary for a stable expression of the CYBA and CYBB subunits of the cytochrome b-245 heterodimer. This chain is Cytochrome b-245 chaperone 1 homolog (cybc1), found in Xenopus laevis (African clawed frog).